The sequence spans 435 residues: Tumor necrosis factor receptor superfamily member 3 (435 aa).

The signal sequence occupies residues Met-1 to Pro-30. Residues Gln-31–Met-227 lie on the Extracellular side of the membrane. Asn-40 is a glycosylation site (N-linked (GlcNAc...) asparagine). TNFR-Cys repeat units lie at residues Thr-42–Ala-81, Thr-82–Cys-124, Arg-125–Val-168, and Pro-169–Lys-211. 10 disulfides stabilise this stretch: Cys-43/Cys-58, Cys-59/Cys-72, Cys-62/Cys-80, Cys-83/Cys-98, Cys-101/Cys-116, Cys-104/Cys-124, Cys-126/Cys-132, Cys-139/Cys-148, Cys-142/Cys-167, and Cys-170/Cys-185. Asn-177 is a glycosylation site (N-linked (GlcNAc...) asparagine). The helical transmembrane segment at Leu-228–Trp-248 threads the bilayer. Residues Lys-249 to Asp-435 lie on the Cytoplasmic side of the membrane. Ser-323 carries the phosphoserine modification. Positions Pro-373–Leu-399 are enriched in pro residues. The disordered stretch occupies residues Pro-373 to Asp-435. Over residues His-403 to His-417 the composition is skewed to basic and acidic residues. The span at Thr-421–Asp-435 shows a compositional bias: polar residues.

Self-associates; dimerization and trimerization are promoted by lymphotoxin (LTA(1)-LTB(2)). Associates with TRAF3. Associates with TRAF4. Associates with TRAF5. Interacts with Aedes aegypti lymphotoxin beta receptor inhibitor; the interaction reduces dimerization and trimerization of LTBR induced by lymphotoxin (LTA(1)-LTB(2)). As to quaternary structure, (Microbial infection) Interacts with HCV core protein.

It localises to the membrane. Functionally, receptor for the heterotrimeric lymphotoxin containing LTA and LTB, and for TNFS14/LIGHT. Activates NF-kappa-B signaling pathway upon stimulation with lymphotoxin (LTA(1)-LTB(2)). Promotes apoptosis via TRAF3 and TRAF5. May play a role in the development of lymphoid organs. The chain is Tumor necrosis factor receptor superfamily member 3 (LTBR) from Homo sapiens (Human).